The chain runs to 582 residues: External alternative NAD(P)H-ubiquinone oxidoreductase B2, mitochondrial (582 aa).

Residues 1-38 (MRNFSVFERFSKAFKDHPSLTRILVVSTISGGGLIAYS) constitute a mitochondrion transit peptide. 60–90 (KVVLLGTGWAGTSFLKNLNNSQYEVQIISPR) serves as a coordination point for FAD. 223–259 (LHFVVVGGGPTGVEFAAELHDFVTEDLVSLYPRAKGS) contacts NAD(+). Residues 379 to 414 (KVMEDVSAIFSKADKDKSGTLTLKEFQEAMDDICVR) enclose the EF-hand domain. Residues D392, D394, S396, T398, and E403 each coordinate Ca(2+). Positions 573–582 (FIFGRDSSSI) match the Microbody targeting signal motif.

Belongs to the NADH dehydrogenase family. FAD serves as cofactor. As to expression, mostly expressed in seedlings and roots and, to a lower extent, in cotyledons, leaves, stems, buds and flowers.

It localises to the mitochondrion inner membrane. The protein resides in the peroxisome. The catalysed reaction is a quinone + NADH + H(+) = a quinol + NAD(+). It carries out the reaction a ubiquinone + NADH + H(+) = a ubiquinol + NAD(+). Its activity is regulated as follows. NADPH oxidase activity is stimulated by calcium ions. Functionally, alternative NADH-ubiquinone oxidoreductase which catalyzes the oxidation of mitochondrial NADH does not translocate protons across the inner mitochondrial membrane. Calcium-dependent NAD(P)H dehydrogenase; more efficient on NADH. Binds calcium ions. The polypeptide is External alternative NAD(P)H-ubiquinone oxidoreductase B2, mitochondrial (NDB2) (Arabidopsis thaliana (Mouse-ear cress)).